The sequence spans 433 residues: Probable mannan endo-1,4-beta-mannosidase F (433 aa).

A signal peptide spans Met-1–Ser-19. One can recognise a CBM1 domain in the interval Gly-20–Val-53. The thr-rich linker stretch occupies residues Thr-56–Thr-82. A catalytic region spans residues Ser-83–Arg-433. N-linked (GlcNAc...) asparagine glycosylation is present at Asn-97. 2 residues coordinate substrate: Trp-142 and Asn-255. Glu-256 acts as the Proton donor in catalysis. Tyr-331 serves as a coordination point for substrate. Catalysis depends on Glu-364, which acts as the Nucleophile. Position 394 (Trp-394) interacts with substrate.

This sequence belongs to the glycosyl hydrolase 5 (cellulase A) family.

It localises to the secreted. It catalyses the reaction Random hydrolysis of (1-&gt;4)-beta-D-mannosidic linkages in mannans, galactomannans and glucomannans.. Functionally, endo-1,4-mannanase, a crucial enzyme for depolymerization of seed galactomannans and wood galactoglucomannans. The protein is Probable mannan endo-1,4-beta-mannosidase F (manF) of Emericella nidulans (strain FGSC A4 / ATCC 38163 / CBS 112.46 / NRRL 194 / M139) (Aspergillus nidulans).